The following is a 322-amino-acid chain: Phosphatidylserine decarboxylase proenzyme (322 aa).

Catalysis depends on charge relay system; for autoendoproteolytic cleavage activity residues Asp90, His147, and Ser254. Catalysis depends on Ser254, which acts as the Schiff-base intermediate with substrate; via pyruvic acid; for decarboxylase activity. Residue Ser254 is modified to Pyruvic acid (Ser); by autocatalysis. The interval Pro293–Val322 is disordered. Residues Glu308–Val322 are compositionally biased toward basic and acidic residues.

This sequence belongs to the phosphatidylserine decarboxylase family. PSD-B subfamily. Prokaryotic type I sub-subfamily. Heterodimer of a large membrane-associated beta subunit and a small pyruvoyl-containing alpha subunit. The cofactor is pyruvate. In terms of processing, is synthesized initially as an inactive proenzyme. Formation of the active enzyme involves a self-maturation process in which the active site pyruvoyl group is generated from an internal serine residue via an autocatalytic post-translational modification. Two non-identical subunits are generated from the proenzyme in this reaction, and the pyruvate is formed at the N-terminus of the alpha chain, which is derived from the carboxyl end of the proenzyme. The autoendoproteolytic cleavage occurs by a canonical serine protease mechanism, in which the side chain hydroxyl group of the serine supplies its oxygen atom to form the C-terminus of the beta chain, while the remainder of the serine residue undergoes an oxidative deamination to produce ammonia and the pyruvoyl prosthetic group on the alpha chain. During this reaction, the Ser that is part of the protease active site of the proenzyme becomes the pyruvoyl prosthetic group, which constitutes an essential element of the active site of the mature decarboxylase.

Its subcellular location is the cell membrane. It catalyses the reaction a 1,2-diacyl-sn-glycero-3-phospho-L-serine + H(+) = a 1,2-diacyl-sn-glycero-3-phosphoethanolamine + CO2. Its pathway is phospholipid metabolism; phosphatidylethanolamine biosynthesis; phosphatidylethanolamine from CDP-diacylglycerol: step 2/2. In terms of biological role, catalyzes the formation of phosphatidylethanolamine (PtdEtn) from phosphatidylserine (PtdSer). This is Phosphatidylserine decarboxylase proenzyme from Escherichia coli O139:H28 (strain E24377A / ETEC).